A 621-amino-acid polypeptide reads, in one-letter code: Exonuclease 3'-5' domain-containing protein 2 (621 aa).

Residues 1–4 are Mitochondrial intermembrane-facing; that stretch reads MSRQ. The helical transmembrane segment at 5–25 threads the bilayer; it reads NLVALTVTTLLGVAVGGFVLW. The Cytoplasmic portion of the chain corresponds to 26 to 621; sequence KGIQRRRRSK…FGEDLPIQLS (596 aa). The tract at residues 34–68 is disordered; the sequence is SKTSPVTQQPQQKVLGSRELPPPEDDQLHSSAPRS. A compositionally biased stretch (polar residues) spans 36 to 47; that stretch reads TSPVTQQPQQKV. Residues Asp-108, Glu-110, and Asp-246 each coordinate a divalent metal cation. A 3'-5' exonuclease domain is found at 155–247; it reads ILADGTILKV…DQVIYAARDA (93 aa). The disordered stretch occupies residues 299–343; the sequence is RLGEEVNGEATESQQKPRNKKSKMDGMVPGNHQGRDPRKHKRKPL.

This sequence belongs to the EXD2 family. As to quaternary structure, homodimer. Interacts with RBBP8, MRE11 and BRCA1. Mg(2+) serves as cofactor. The cofactor is Mn(2+).

The protein localises to the mitochondrion outer membrane. It localises to the mitochondrion matrix. It is found in the nucleus. The protein resides in the chromosome. It carries out the reaction Exonucleolytic cleavage in the 3'- to 5'-direction to yield nucleoside 5'-phosphates.. In terms of biological role, exonuclease that has both 3'-5' exoribonuclease and exodeoxyribonuclease activities, depending on the divalent metal cation used as cofactor. In presence of Mg(2+), only shows 3'-5' exoribonuclease activity, while it shows both exoribonuclease and exodeoxyribonuclease activities in presence of Mn(2+). Acts as an exoribonuclease in mitochondrion, possibly by regulating ATP production and mitochondrial translation. Also involved in the response to DNA damage. Acts as 3'-5' exodeoxyribonuclease for double-strand breaks resection and efficient homologous recombination. Plays a key role in controlling the initial steps of chromosomal break repair, it is recruited to chromatin in a damage-dependent manner and functionally interacts with the MRN complex to accelerate resection through its 3'-5' exonuclease activity, which efficiently processes double-stranded DNA substrates containing nicks. Also involved in response to replicative stress: recruited to stalled forks and is required to stabilize and restart stalled replication forks by restraining excessive fork regression, thereby suppressing their degradation. This chain is Exonuclease 3'-5' domain-containing protein 2, found in Homo sapiens (Human).